The chain runs to 380 residues: Pregnancy-associated glycoprotein 4 (380 aa).

Residues 1-15 form the signal peptide; that stretch reads MKWLVLLGLVAFSEC. Residues 16 to 53 constitute a propeptide, activation peptide; it reads IFKIPLRRVKTMRKTLSGKNMLNDVLKEHPYRLPQISF. One can recognise a Peptidase A1 domain in the interval 71–377; the sequence is YVGNITIGTP…DRGNDRIGLA (307 aa). Asparagine 74 carries an N-linked (GlcNAc...) asparagine glycan. Residue aspartate 89 is part of the active site. A disulfide bridge links cysteine 102 with cysteine 107. Residue asparagine 125 is glycosylated (N-linked (GlcNAc...) asparagine). Cysteine 261 and cysteine 265 are disulfide-bonded. The active site involves aspartate 270. An intrachain disulfide couples cysteine 303 to cysteine 337.

This sequence belongs to the peptidase A1 family. In terms of tissue distribution, trophoblast and placental tissue. Produced specifically in the invasive binucleate cells of the placenta.

The protein resides in the secreted. It is found in the extracellular space. This chain is Pregnancy-associated glycoprotein 4, found in Ovis aries (Sheep).